A 188-amino-acid chain; its full sequence is Inosine triphosphate pyrophosphatase (188 aa).

Position 9 to 14 (Thr9 to Lys14) interacts with ITP. Residue Glu39 coordinates Mg(2+). ITP contacts are provided by residues Lys51, Asp67–Thr68, Lys84, Phe143–Asp146, Lys166, and His171–Arg172.

Belongs to the HAM1 NTPase family. In terms of assembly, homodimer. Mg(2+) is required as a cofactor. The cofactor is Mn(2+).

It is found in the cytoplasm. The catalysed reaction is ITP + H2O = IMP + diphosphate + H(+). It catalyses the reaction dITP + H2O = dIMP + diphosphate + H(+). It carries out the reaction XTP + H2O = XMP + diphosphate + H(+). In terms of biological role, pyrophosphatase that hydrolyzes non-canonical purine nucleotides such as inosine triphosphate (ITP), deoxyinosine triphosphate (dITP) or xanthosine 5'-triphosphate (XTP) to their respective monophosphate derivatives. The enzyme does not distinguish between the deoxy- and ribose forms. Probably excludes non-canonical purines from RNA and DNA precursor pools, thus preventing their incorporation into RNA and DNA and avoiding chromosomal lesions. The chain is Inosine triphosphate pyrophosphatase from Aedes aegypti (Yellowfever mosquito).